The primary structure comprises 295 residues: Protein transport protein SSO2 (295 aa).

Positions 1 to 18 (MSNPYQNSQNGYQQNNSY) are enriched in low complexity. The tract at residues 1–31 (MSNPYQNSQNGYQQNNSYELNNYPNKQYSSS) is disordered. At 1–270 (MSNPYQNSQN…SAKSARKKKL (270 aa)) the chain is on the cytoplasmic side. The segment covering 19–31 (ELNNYPNKQYSSS) has biased composition (polar residues). Positions 33-110 (EDDFVQFMNE…NRIKNVQTQA (78 aa)) form a coiled coil. The t-SNARE coiled-coil homology domain occupies 196–258 (LNEVQVRHRE…EQGVGHTNKA (63 aa)). Residues 271-291 (WCFFICLLIVIILAVILGAYF) form a helical; Anchor for type IV membrane protein membrane-spanning segment. Residues 292-295 (GTRK) are Extracellular-facing.

This sequence belongs to the syntaxin family.

The protein resides in the membrane. In terms of biological role, late secretory t-SNARE protein required for secretion and proper cytokinesis. Plays an important role in the secretion of virulence-associated extracellular enzymes and vesicle-mediated polarized hyphal growth. The protein is Protein transport protein SSO2 (SSO2) of Candida albicans (strain SC5314 / ATCC MYA-2876) (Yeast).